The sequence spans 189 residues: NADH-quinone oxidoreductase subunit B (189 aa).

[4Fe-4S] cluster contacts are provided by C39, C40, C104, and C135.

The protein belongs to the complex I 20 kDa subunit family. In terms of assembly, NDH-1 is composed of 14 different subunits. Subunits NuoB, C, D, E, F, and G constitute the peripheral sector of the complex. [4Fe-4S] cluster serves as cofactor.

It is found in the cell inner membrane. It carries out the reaction a quinone + NADH + 5 H(+)(in) = a quinol + NAD(+) + 4 H(+)(out). Its function is as follows. NDH-1 shuttles electrons from NADH, via FMN and iron-sulfur (Fe-S) centers, to quinones in the respiratory chain. The immediate electron acceptor for the enzyme in this species is believed to be a menaquinone. Couples the redox reaction to proton translocation (for every two electrons transferred, four hydrogen ions are translocated across the cytoplasmic membrane), and thus conserves the redox energy in a proton gradient. This Pelodictyon phaeoclathratiforme (strain DSM 5477 / BU-1) protein is NADH-quinone oxidoreductase subunit B.